The sequence spans 296 residues: 4-hydroxy-tetrahydrodipicolinate synthase (296 aa).

Residue Thr49 coordinates pyruvate. Tyr137 (proton donor/acceptor) is an active-site residue. The Schiff-base intermediate with substrate role is filled by Lys165. A pyruvate-binding site is contributed by Ile208.

It belongs to the DapA family. As to quaternary structure, homotetramer; dimer of dimers.

It localises to the cytoplasm. It catalyses the reaction L-aspartate 4-semialdehyde + pyruvate = (2S,4S)-4-hydroxy-2,3,4,5-tetrahydrodipicolinate + H2O + H(+). It functions in the pathway amino-acid biosynthesis; L-lysine biosynthesis via DAP pathway; (S)-tetrahydrodipicolinate from L-aspartate: step 3/4. Functionally, catalyzes the condensation of (S)-aspartate-beta-semialdehyde [(S)-ASA] and pyruvate to 4-hydroxy-tetrahydrodipicolinate (HTPA). This Ehrlichia canis (strain Jake) protein is 4-hydroxy-tetrahydrodipicolinate synthase.